The sequence spans 305 residues: Superoxide dismutase [Fe] 2, chloroplastic (305 aa).

A chloroplast-targeting transit peptide spans 1 to 46; it reads MMNVAVTATPSSLLYSPLLLPSQGPNRRMQWKRNGKRRLGTKVAVS. Fe cation-binding residues include histidine 77, histidine 129, aspartate 228, and histidine 232. The segment at 270-305 is disordered; that stretch reads AVQREQEGTETEDEENPDDEVPEVYLDSDIDVSEVD. The span at 277–305 shows a compositional bias: acidic residues; it reads GTETEDEENPDDEVPEVYLDSDIDVSEVD.

It belongs to the iron/manganese superoxide dismutase family. Heterodimer with FSD3. Interacts with MRL7 and PRDA1. The cofactor is Fe cation.

It is found in the plastid. The protein resides in the chloroplast thylakoid. It carries out the reaction 2 superoxide + 2 H(+) = H2O2 + O2. Its activity is regulated as follows. Activated by cpn20/cpn21 (in vitro). Functionally, destroys superoxide anion radicals which are normally produced within the cells and which are toxic to biological systems. Plays important role in chloroplast development, particularly in the maintenance of thylakoids membranes. Seems to act as a heterodimer with FSD3. The protein is Superoxide dismutase [Fe] 2, chloroplastic (FSD2) of Arabidopsis thaliana (Mouse-ear cress).